Consider the following 61-residue polypeptide: Large ribosomal subunit protein uL30 (61 aa).

This sequence belongs to the universal ribosomal protein uL30 family. In terms of assembly, part of the 50S ribosomal subunit.

This Chlorobaculum parvum (strain DSM 263 / NCIMB 8327) (Chlorobium vibrioforme subsp. thiosulfatophilum) protein is Large ribosomal subunit protein uL30.